A 272-amino-acid polypeptide reads, in one-letter code: Protein STAY-GREEN 1, chloroplastic (272 aa).

The transit peptide at 1-50 (MGTLTTSLVVPSKLNNEQQSSIFIHKTRRKCKKNQSIVPVARLFGPAIFE) directs the protein to the chloroplast. The interval 201-222 (TSPSSSSGGVGGVKSTSFTSNS) is disordered.

The protein belongs to the staygreen family. In terms of assembly, interacts with PSY1.

Its subcellular location is the plastid. It localises to the chloroplast. Functionally, required to trigger chlorophyll degradation during leaf senescence and fruit ripening. Binds directly PSY1 to regulate the accumulation of lycopene and beta-carotene in the maturing fruits. The polypeptide is Protein STAY-GREEN 1, chloroplastic (Solanum lycopersicum (Tomato)).